The primary structure comprises 252 residues: Probable transcriptional regulatory protein A1C_04175 (252 aa).

The protein belongs to the TACO1 family.

The protein localises to the cytoplasm. This is Probable transcriptional regulatory protein A1C_04175 from Rickettsia akari (strain Hartford).